The sequence spans 101 residues: NAD(P)H-quinone oxidoreductase subunit 4L, chloroplastic (101 aa).

3 helical membrane passes run 2-22 (ILEHVLVLSAYLFFIGLYGLI), 32-52 (MCLELILNAVNMNFVTFSDFF), and 61-81 (IFCIFVIAIAAAEAAIGLAIV).

Belongs to the complex I subunit 4L family. NDH is composed of at least 16 different subunits, 5 of which are encoded in the nucleus.

Its subcellular location is the plastid. The protein resides in the chloroplast thylakoid membrane. It carries out the reaction a plastoquinone + NADH + (n+1) H(+)(in) = a plastoquinol + NAD(+) + n H(+)(out). It catalyses the reaction a plastoquinone + NADPH + (n+1) H(+)(in) = a plastoquinol + NADP(+) + n H(+)(out). Its function is as follows. NDH shuttles electrons from NAD(P)H:plastoquinone, via FMN and iron-sulfur (Fe-S) centers, to quinones in the photosynthetic chain and possibly in a chloroplast respiratory chain. The immediate electron acceptor for the enzyme in this species is believed to be plastoquinone. Couples the redox reaction to proton translocation, and thus conserves the redox energy in a proton gradient. In Aethionema cordifolium (Lebanon stonecress), this protein is NAD(P)H-quinone oxidoreductase subunit 4L, chloroplastic.